We begin with the raw amino-acid sequence, 159 residues long: uncharacterized protein (159 aa).

Residues 1-139 (MSRRAPGSRL…RKSQERSMSY (139 aa)) form a disordered region. Residues 9 to 31 (RLSSGGTNYSRSWNDWQPRTDSA) are compositionally biased toward polar residues. Over residues 65-82 (QRHDDTRVHADIQNDEKG) the composition is skewed to basic and acidic residues. Residues 105 to 119 (RVNNVTSPEFTSVQH) are compositionally biased toward polar residues. Basic and acidic residues predominate over residues 125–134 (ATKDMRKSQE).

This is an uncharacterized protein from Homo sapiens (Human).